The primary structure comprises 161 residues: Low molecular weight phosphotyrosine protein phosphatase (161 aa).

C14 acts as the Nucleophile in catalysis. The active-site Transition state stabilizer is R20. S57 carries the phosphoserine modification. Residue D133 is the Proton donor of the active site.

It belongs to the low molecular weight phosphotyrosine protein phosphatase family.

The protein resides in the cytoplasm. It carries out the reaction O-phospho-L-tyrosyl-[protein] + H2O = L-tyrosyl-[protein] + phosphate. It catalyses the reaction a phosphate monoester + H2O = an alcohol + phosphate. Acts on tyrosine phosphorylated proteins, low-MW aryl phosphates and natural and synthetic acyl phosphates. The chain is Low molecular weight phosphotyrosine protein phosphatase from Saccharomyces cerevisiae (strain ATCC 204508 / S288c) (Baker's yeast).